The chain runs to 412 residues: Translation initiation factor 2 subunit gamma (412 aa).

A tr-type G domain is found at 8-205 (QAEMNIGMVG…AMYEHFEPPE (198 aa)). The tract at residues 17 to 24 (GHVDHGKT) is G1. Residues Asp-20, Thr-24, Gly-45, and Ser-47 each contribute to the Mg(2+) site. Residue 20-25 (DHGKTT) coordinates GTP. The interval 45–49 (GISIR) is G2. Residues Cys-60, Cys-63, Cys-72, and Cys-75 each contribute to the Zn(2+) site. Residues 89–92 (DSPG) form a G3 region. GTP contacts are provided by residues 145-148 (NKID) and 183-185 (SAQ). Positions 145–148 (NKID) are G4. A G5 region spans residues 183-185 (SAQ).

It belongs to the TRAFAC class translation factor GTPase superfamily. Classic translation factor GTPase family. EIF2G subfamily. Heterotrimer composed of an alpha, a beta and a gamma chain. It depends on Mg(2+) as a cofactor.

It catalyses the reaction GTP + H2O = GDP + phosphate + H(+). Functionally, eIF-2 functions in the early steps of protein synthesis by forming a ternary complex with GTP and initiator tRNA. The polypeptide is Translation initiation factor 2 subunit gamma (Methanopyrus kandleri (strain AV19 / DSM 6324 / JCM 9639 / NBRC 100938)).